Consider the following 186-residue polypeptide: UPF0149 protein Pfl01_5435 (186 aa).

This sequence belongs to the UPF0149 family.

The sequence is that of UPF0149 protein Pfl01_5435 from Pseudomonas fluorescens (strain Pf0-1).